Here is a 1088-residue protein sequence, read N- to C-terminus: Neural cell adhesion molecule 1-A (1088 aa).

Residues 1–19 form the signal peptide; sequence MLHIKDLIWTLYFIGTAVA. 5 Ig-like C2-type domains span residues 20-108, 113-202, 209-294, 303-397, and 400-484; these read LEVN…GTVN, QKLT…KDIQ, PTIQ…AEAT, PKIT…FEVQ, and PKIR…HEFS. Residues 20–705 are Extracellular-facing; sequence LEVNIVPDQG…TASAGTGLGT (686 aa). 2 disulfide bridges follow: C41/C93 and C136/C186. An N-linked (GlcNAc...) asparagine glycan is attached at N82. Heparin-binding positions include 149 to 153 and 158 to 162; these read RHKGK and KKDVR. A glycan (N-linked (GlcNAc...) asparagine) is linked at N219. A disulfide bridge links C232 with C282. N-linked (GlcNAc...) asparagine glycans are attached at residues N310, N341, N417, N443, and N472. A disulfide bond links C323 and C379. A disulfide bridge links C420 with C473. 2 consecutive Fibronectin type-III domains span residues 493–592 and 594–690; these read TPSS…TQPV and EPSA…TAKP. Residues 706-723 form a helical membrane-spanning segment; that stretch reads GAIVGILIVIFVLLLVVV. The Cytoplasmic portion of the chain corresponds to 724-1088; the sequence is DVTCFFLNKC…TQTNANESKA (365 aa). Residues 758 to 784 show a composition bias toward basic and acidic residues; it reads EGKAAFSKDESKEPIVEVRTEEERTPN. Disordered stretches follow at residues 758–802, 829–1000, and 1024–1088; these read EGKA…LTEP, FATA…DGGT, and VASG…ESKA. 3 stretches are compositionally biased toward low complexity: residues 835–847, 854–875, and 913–936; these read SPTSETTTLTSST, APDSNTIQSIQATPSKAEAPTT, and PSAATSAAEPPTVIIKPVTTVPPN. Polar residues predominate over residues 965-974; that stretch reads QPSTVKNPTE. Positions 1046–1064 are enriched in basic and acidic residues; that stretch reads AKTEKTQVEEKSKPEEIDV. Residues 1076–1088 are compositionally biased toward polar residues; the sequence is NEATQTNANESKA.

In terms of processing, polysialylated by ST8SIA2 and ST8SIA4. Polysialylation modulates cell interactions by confering both attractive and repulsive properties that are highly regulated by ST8SIA2 and ST8SIA4. Polysialylation is formed on a-2,3-linked sialic acid of core glycans. In terms of tissue distribution, expressed in neuron and in presumptive neural tissue.

The protein resides in the cell membrane. In terms of biological role, this protein is a cell adhesion molecule involved in neuron-neuron adhesion, neurite fasciculation, outgrowth of neurites, etc. The polypeptide is Neural cell adhesion molecule 1-A (Xenopus laevis (African clawed frog)).